Consider the following 593-residue polypeptide: Inactive metallocarboxypeptidase ECM14 (593 aa).

A signal peptide spans 1-22 (MHVTVQLSLLLSLASSLPLVSA). A propeptide spanning residues 23 to 175 (IPQHDGQAYT…QAIYESYPKN (153 aa)) is cleaved from the precursor. Disordered stretches follow at residues 75 to 98 (VPQR…KAPA) and 172 to 202 (YPKN…SQPH). Basic and acidic residues predominate over residues 78–88 (RGKDSETKTGK). The span at 188-199 (RRFSPSASTPES) shows a compositional bias: polar residues. The Peptidase M14 domain maps to 211–537 (DYQPLSVLLP…HAVVAMGKFL (327 aa)). The Zn(2+) site is built by histidine 276 and glutamate 279. Substrate contacts are provided by residues 276-279 (HARE), arginine 334, and 351-352 (DR). An intrachain disulfide couples cysteine 345 to cysteine 368. A glycan (N-linked (GlcNAc...) asparagine) is linked at asparagine 361. Residue histidine 408 participates in Zn(2+) binding. Substrate is bound at residue 409 to 410 (SY). Positions 548–593 (DEPHAGEQTQDNSYDEDGDNLFRAQGGDPQVRFTRRNIGAHDDDSE) are disordered.

Belongs to the peptidase M14 family. The cofactor is Zn(2+).

The protein resides in the vacuole. The protein localises to the secreted. Functionally, inactive carboxypeptidase that may play a role in cell wall organization and biogenesis. The protein is Inactive metallocarboxypeptidase ECM14 (ECM14) of Arthroderma otae (strain ATCC MYA-4605 / CBS 113480) (Microsporum canis).